The sequence spans 495 residues: Ribose import ATP-binding protein RbsA (495 aa).

ABC transporter domains lie at 7–242 (LEMR…VGRP) and 250–491 (ERDI…TGVN). 39–46 (GENGAGKS) lines the ATP pocket.

It belongs to the ABC transporter superfamily. Ribose importer (TC 3.A.1.2.1) family. The complex is composed of an ATP-binding protein (RbsA), two transmembrane proteins (RbsC) and a solute-binding protein (RbsB).

The protein resides in the cell inner membrane. It catalyses the reaction D-ribose(out) + ATP + H2O = D-ribose(in) + ADP + phosphate + H(+). Part of the ABC transporter complex RbsABC involved in ribose import. Responsible for energy coupling to the transport system. The polypeptide is Ribose import ATP-binding protein RbsA (Shigella dysenteriae serotype 1 (strain Sd197)).